A 279-amino-acid chain; its full sequence is Oxygen-dependent coproporphyrinogen-III oxidase (279 aa).

Residue serine 102 participates in substrate binding. Residues histidine 106 and histidine 116 each coordinate a divalent metal cation. The active-site Proton donor is the histidine 116. 118–120 (NTR) is a binding site for substrate. A divalent metal cation-binding residues include histidine 149 and histidine 179. Residues 244-279 (YVEFNLLYDRGTKFGLMTDGNVEAILMSLPPEVKFN) form an important for dimerization region.

It belongs to the aerobic coproporphyrinogen-III oxidase family. In terms of assembly, homodimer. It depends on a divalent metal cation as a cofactor.

The protein resides in the cytoplasm. It carries out the reaction coproporphyrinogen III + O2 + 2 H(+) = protoporphyrinogen IX + 2 CO2 + 2 H2O. It functions in the pathway porphyrin-containing compound metabolism; protoporphyrin-IX biosynthesis; protoporphyrinogen-IX from coproporphyrinogen-III (O2 route): step 1/1. Functionally, involved in the heme biosynthesis. Catalyzes the aerobic oxidative decarboxylation of propionate groups of rings A and B of coproporphyrinogen-III to yield the vinyl groups in protoporphyrinogen-IX. The protein is Oxygen-dependent coproporphyrinogen-III oxidase of Rickettsia rickettsii (strain Iowa).